The primary structure comprises 1857 residues: MEQLTTLPRPGDPGAMEPWALPTWHSWTPGRGGEPSSAAPSIADTPPAALQLQELRSEESSKPKGDGSSRPVGGTDPEGAEACLPSLGQQASSSGPACQRPEDEEVEAFLKAKLNMSFGDRPNLELLRALGELRQRCAILKEENQMLRKSSFPETEEKVRRLKRKNAELAVIAKRLEERARKLQETNLRVVSAPLPRPGTSLELCRKALARQRARDLSETASALLAKDKQIAALQRECRELQARLTLVGKEGPQWLHVRDFDRLLRESQREVLRLQRQIALRNQRETLPLPPSWPPGPALQARAGAPAPGAPGEATPQEDADNLPVILGEPEKEQRVQQLESELSKKRKKCESLEQEARKKQRRCEELELQLRQAQNENARLVEENSRLSGRATEKEQVEWENAELRGQLLGVTQERDSALRKSQGLQSKLESLEQVLKHMREVAQRRQQLEVEHEQARLSLREKQEEVRRLQQAQAEAQREHEGAVQLLESTLDSMQARVRELEEQCRSQTEQFSLLAQELQAFRLHPGPLDLLTSALDCGSLGDCPPPPCCCSIPQPCRGSGPKDLDLPPGSPGRCTPKSSEPAPATLTGVPRRTAKKAESLSNSSHSESIHNSPKSCPTPEVDTASEVEELEADSVSLLPAAPEGSRGGARIQVFLARYSYNPFEGPNENPEAELPLTAGEYIYIYGNMDEDGFFEGELMDGRRGLVPSNFVERVSDDDLLTSLPPELADLSHSSGPELSFLSVGGGGSSSGGQSSVGRSQPRPEEEDAGDELSLSPSPEGLGEPPAVPYPRRLVVLKQLAHSVVLAWEPPPEQVELHGFHICVNGELRQALGPGAPPKAVLENLDLWAGPLHISVQALTSRGSSDPLRCCLAVGARAGVVPSQLRVHRLTATSAEITWVPGNSNLAHAIYLNGEECPPASPSTYWATFCHLRPGTPYQAQVEAQLPPQGPWEPGWERLEQRAATLQFTTLPAGPPDAPLDVQIEPGPSPGILIISWLPVTIDAAGTSNGVRVTGYAIYADGQKIMEVASPTAGSVLVELSQLQLLQVCREVVVRTMSPHGESADSIPAPITPALAPASLPARVSCPSPHPSPEARAPLASASPGPGDPSSPLQHPAPLGTQEPPGAPPASPSREMAKGSHEDPPAPCSQEEAGAAVLGTSEERTASTSTLGEKDPGPAAPSLAKQEAEWTAGEACPASSSTQGARAQQAPNTEMCQGGDPGSGLRPRAEKEDTAELGVHLVNSLVDHGRNSDLSDIQEEEEEEEEEEEEELGSRTCSFQKQVAGNSIRENGAKSQPDPFCETDSDEEILEQILELPLQQFCSKKLFSIPEEEEEEEEDEEEEKSGAGCSSRDPGPPEPALLGLGCDSGQPRRPGQCPLSPESSRAGDCLEDMPGLVGGSSRRRGGGSPEKPPSRRRPPDPREHCSRLLSNNGPQASGRLGPTRERGGLPVIEGPRTGLEASGRGRLGPSRRCSRGRALEPGLASCLSPKCLEISIEYDSEDEQEAGSGGISITSSCYPGDGEAWGTATVGRPRGPPKANSGPKPYPRLPAWEKGEPERRGRSATGRAKEPLSRATETGEARGQDGSGRRGPQKRGVRVLRPSTAELVPARSPSETLAYQHLPVRIFVALFDYDPVSMSPNPDAGEEELPFREGQILKVFGDKDADGFYQGEGGGRTGYIPCNMVAEVAVDSPAGRQQLLQRGYLSPDILLEGSGNGPFVYSTAHTTGPPPKPRRSKKAESEGPAQPCPGPPKLVPSADLKAPHSMVAAFDYNPQESSPNMDVEAELPFRAGDVITVFGGMDDDGFYYGELNGQRGLVPSNFLEGPGPEAGGLDREPRTPQAESQRTRRRRVQC.

Disordered stretches follow at residues 1–103 (MEQL…RPED), 284–321 (QRET…QEDA), and 565–629 (PKDL…DTAS). Positions 55–67 (LRSEESSKPKGDG) are enriched in basic and acidic residues. A compositionally biased stretch (polar residues) spans 87–96 (LGQQASSSGP). Over residues 289 to 298 (PLPPSWPPGP) the composition is skewed to pro residues. Low complexity-rich tracts occupy residues 299–316 (ALQA…GEAT) and 603–616 (SLSN…IHNS). Residues 653–720 (ARIQVFLARY…PSNFVERVSD (68 aa)) form the SH3 1 domain. A disordered region spans residues 729–789 (PELADLSHSS…PSPEGLGEPP (61 aa)). Residues 755-764 (GGQSSVGRSQ) are compositionally biased toward low complexity. Fibronectin type-III domains lie at 791–882 (VPYP…ARAG), 884–976 (VPSQ…TLPA), and 981–1081 (APLD…LAPA). Disordered stretches follow at residues 1083–1311 (LPAR…SDEE), 1330–1479 (FSIP…CSRG), and 1501–1601 (YDSE…RGVR). The segment covering 1098–1116 (ARAPLASASPGPGDPSSPL) has biased composition (low complexity). Over residues 1138–1147 (EMAKGSHEDP) the composition is skewed to basic and acidic residues. The segment covering 1201–1218 (ASSSTQGARAQQAPNTEM) has biased composition (polar residues). Residues 1259 to 1274 (DIQEEEEEEEEEEEEE) are compositionally biased toward acidic residues. Polar residues predominate over residues 1278–1292 (RTCSFQKQVAGNSIR). Residues 1333–1346 (PEEEEEEEEDEEEE) show a composition bias toward acidic residues. Basic and acidic residues-rich tracts occupy residues 1420–1429 (RPPDPREHCS) and 1554–1586 (AWEK…EARG). In terms of domain architecture, SH3 2 spans 1625-1693 (LPVRIFVALF…PCNMVAEVAV (69 aa)). Disordered stretches follow at residues 1723–1761 (VYST…VPSA) and 1823–1857 (SNFL…RVQC). The region spanning 1764-1831 (KAPHSMVAAF…PSNFLEGPGP (68 aa)) is the SH3 3 domain.

This sequence belongs to the RIMBP family. As to quaternary structure, interacts with RIMS1 and RIMS2. Interacts with TSPO. Interacts with CACNA1A. As to expression, predominantly expressed in brain, pituitary gland and thymus in adults. In adult brain, highest expression found in temporal lobe and the putamen, followed by amygdala, caudate nucleus, cerebral cortex, occipital and frontal lobe. A high expression level is also observed in fetal tissues like brain, heart, kidney and thymus.

The protein resides in the cytoplasm. The protein localises to the mitochondrion. In terms of biological role, required for synaptic transmission regulation. It probably controls the recruitement of voltage-gated calcium channels to the presynaptic membrane, and modulates neurotransmitter release. This chain is Peripheral-type benzodiazepine receptor-associated protein 1, found in Homo sapiens (Human).